Consider the following 135-residue polypeptide: Protein E6 (135 aa).

Zinc fingers lie at residues 11 to 47 (CIWC…CTSC) and 83 to 119 (CMYC…CYLC).

This sequence belongs to the papillomaviridae E6 protein family. As to quaternary structure, forms homodimers. Interacts with ubiquitin-protein ligase UBE3A/E6-AP; this interaction stimulates UBE3A ubiquitin activity. Interacts with host BAK1.

It localises to the host cytoplasm. The protein resides in the host nucleus. In terms of biological role, plays a major role in the induction and maintenance of cellular transformation. E6 associates with host UBE3A/E6-AP ubiquitin-protein ligase and modulates its activity. Protects host keratinocytes from apoptosis by mediating the degradation of host BAK1. May also inhibit host immune response. The chain is Protein E6 from Cervus elaphus (Red deer).